Here is a 403-residue protein sequence, read N- to C-terminus: Accessory Sec system protein translocase subunit SecY2 (403 aa).

Transmembrane regions (helical) follow at residues 17–37 (MLYTCFILFIYILGTNISIVS), 63–83 (LNIFTLGLVPWLTSMIILMLI), 105–125 (ILTLILSVIQSYFVIHEYVSK), 131–151 (DNIYLTILILVTGTMLLVWLA), 157–177 (YGIAGPMPIVMVSIIKSMMHQ), 186–206 (HIVIALLIILVIITLFILLFI), 240–260 (ITLMMSISAFVFLKSGIHFIL), 276–296 (FDSPVGISVYLVIQMLLGYFL), 339–359 (WFGSALVTVIIGIPLYFTLFV), and 366–386 (IYFSVQLIVLVYISINIAETI).

This sequence belongs to the SecY/SEC61-alpha family. SecY2 subfamily. In terms of assembly, component of the accessory SecA2/SecY2 protein translocase complex required to export cell wall proteins. May form heterotrimers with SecE and SecG subunits.

It localises to the cell membrane. In terms of biological role, part of the accessory SecA2/SecY2 system specifically required for export of possible cell wall proteins. The central subunit of a protein translocation channel. The chain is Accessory Sec system protein translocase subunit SecY2 from Staphylococcus aureus (strain N315).